The following is a 90-amino-acid chain: uncharacterized protein (90 aa).

An Isoglutamyl lysine isopeptide (Lys-Gln) (interchain with Q-Cter in protein Pup) cross-link involves residue lysine 88.

This is an uncharacterized protein from Mycolicibacterium smegmatis (strain ATCC 700084 / mc(2)155) (Mycobacterium smegmatis).